A 330-amino-acid chain; its full sequence is Phosphate acyltransferase (330 aa).

The protein belongs to the PlsX family. Homodimer. Probably interacts with PlsY.

Its subcellular location is the cytoplasm. The catalysed reaction is a fatty acyl-[ACP] + phosphate = an acyl phosphate + holo-[ACP]. It participates in lipid metabolism; phospholipid metabolism. Functionally, catalyzes the reversible formation of acyl-phosphate (acyl-PO(4)) from acyl-[acyl-carrier-protein] (acyl-ACP). This enzyme utilizes acyl-ACP as fatty acyl donor, but not acyl-CoA. The polypeptide is Phosphate acyltransferase (Teredinibacter turnerae (strain ATCC 39867 / T7901)).